Here is an 84-residue protein sequence, read N- to C-terminus: Small ribosomal subunit protein bS18A (84 aa).

This sequence belongs to the bacterial ribosomal protein bS18 family. In terms of assembly, part of the 30S ribosomal subunit. Forms a tight heterodimer with protein bS6.

Binds as a heterodimer with protein bS6 to the central domain of the 16S rRNA, where it helps stabilize the platform of the 30S subunit. The polypeptide is Small ribosomal subunit protein bS18A (Mycobacterium marinum (strain ATCC BAA-535 / M)).